We begin with the raw amino-acid sequence, 272 residues long: 4-hydroxy-tetrahydrodipicolinate reductase (272 aa).

12 to 17 (GALGKM) lines the NAD(+) pocket. An NADP(+)-binding site is contributed by Lys-39. Residues 102–104 (GTT) and 126–129 (SSNY) contribute to the NAD(+) site. Residue His-159 is the Proton donor/acceptor of the active site. His-160 contacts (S)-2,3,4,5-tetrahydrodipicolinate. Lys-163 serves as the catalytic Proton donor. 169–170 (GT) lines the (S)-2,3,4,5-tetrahydrodipicolinate pocket.

Belongs to the DapB family. As to quaternary structure, homotetramer.

It is found in the cytoplasm. It carries out the reaction (S)-2,3,4,5-tetrahydrodipicolinate + NAD(+) + H2O = (2S,4S)-4-hydroxy-2,3,4,5-tetrahydrodipicolinate + NADH + H(+). The enzyme catalyses (S)-2,3,4,5-tetrahydrodipicolinate + NADP(+) + H2O = (2S,4S)-4-hydroxy-2,3,4,5-tetrahydrodipicolinate + NADPH + H(+). It participates in amino-acid biosynthesis; L-lysine biosynthesis via DAP pathway; (S)-tetrahydrodipicolinate from L-aspartate: step 4/4. In terms of biological role, catalyzes the conversion of 4-hydroxy-tetrahydrodipicolinate (HTPA) to tetrahydrodipicolinate. In Buchnera aphidicola subsp. Baizongia pistaciae (strain Bp), this protein is 4-hydroxy-tetrahydrodipicolinate reductase.